Consider the following 245-residue polypeptide: tRNA pseudouridine synthase A 1 (245 aa).

The active-site Nucleophile is the aspartate 53. Substrate is bound at residue tyrosine 111.

The protein belongs to the tRNA pseudouridine synthase TruA family. As to quaternary structure, homodimer.

The enzyme catalyses uridine(38/39/40) in tRNA = pseudouridine(38/39/40) in tRNA. Formation of pseudouridine at positions 38, 39 and 40 in the anticodon stem and loop of transfer RNAs. This Clostridium tetani (strain Massachusetts / E88) protein is tRNA pseudouridine synthase A 1.